A 156-amino-acid polypeptide reads, in one-letter code: MQLVIAAVGHKMPAWIESGFGEYAKRMPADCRVHLKEIKPVERSGSKTAETAMALERAKIEAALPKGARIIALDEHGKDLTSVQLAQLLTQWQQDGRDVAFIIGGADGLDAEFKKNADMLIRISSMTLPHGMVRVLLAEQLYRAWSITQNHPYHRV.

S-adenosyl-L-methionine-binding positions include L73, G104, and I123–L128.

Belongs to the RNA methyltransferase RlmH family. Homodimer.

The protein localises to the cytoplasm. It carries out the reaction pseudouridine(1915) in 23S rRNA + S-adenosyl-L-methionine = N(3)-methylpseudouridine(1915) in 23S rRNA + S-adenosyl-L-homocysteine + H(+). In terms of biological role, specifically methylates the pseudouridine at position 1915 (m3Psi1915) in 23S rRNA. The chain is Ribosomal RNA large subunit methyltransferase H from Janthinobacterium sp. (strain Marseille) (Minibacterium massiliensis).